Here is a 424-residue protein sequence, read N- to C-terminus: MANPTTGKSSIRAKLSNSSLSNLFKKNKNKRQREETEEQDNEDKDESKNQDENKDTQLTPRKRRRLTKEFEEKEARYTNELPKELRKYRPKGFRFNLPPTDRPIRIYADGVFDLFHLGHMKQLEQCKKAFPNVTLIVGVPSDKITHKLKGLTVLTDKQRCETLTHCRWVDEVVPNAPWCVTPEFLLEHKIDYVAHDDIPYVSADSDDIYKPIKEMGKFLTTQRTNGVSTSDIITKIIRDYDKYLMRNFARGATRQELNVSWLKKNELEFKKHINEFRSYFKKNQTNLNNASRDLYFEVREILLKKTLGKKLYSKLIGNELKKQNQRQRKQNFLDDPFTRKLIREASPATEFANEFTGENSTAKSPDDNGNLFSQEDDEDTNSNNTNTNSDSDSNTNSTPPSEDDDDNDRLTLENLTQKKKQSAN.

The interval 1–70 is disordered; it reads MANPTTGKSS…RKRRRLTKEF (70 aa). Positions 14–24 are enriched in low complexity; the sequence is KLSNSSLSNLF. Position 16 is a phosphoserine (Ser-16). Residues 35-44 show a composition bias toward acidic residues; it reads ETEEQDNEDK. The segment covering 45–55 has biased composition (basic and acidic residues); that stretch reads DESKNQDENKD. Thr-59 is modified (phosphothreonine). Residues 111 to 119 and Lys-149 each bind CTP; that span reads VFDLFHLGH. The substrate site is built by Lys-149 and Trp-178. CTP-binding positions include 195–196, Tyr-200, and 223–227; these read HD and RTNGV. Ser-346 carries the phosphoserine modification. Residues 348 to 424 form a disordered region; sequence ATEFANEFTG…LTQKKKQSAN (77 aa). Residues 381-398 are compositionally biased toward low complexity; sequence NSNNTNTNSDSDSNTNST. Ser-401 is subject to Phosphoserine; by CK2.

The protein belongs to the cytidylyltransferase family.

The protein resides in the membrane. The catalysed reaction is phosphocholine + CTP + H(+) = CDP-choline + diphosphate. It participates in phospholipid metabolism; phosphatidylcholine biosynthesis; phosphatidylcholine from phosphocholine: step 1/2. In terms of biological role, catalyzes the key rate-limiting step in the CDP-choline pathway for phosphatidylcholine biosynthesis. This is Choline-phosphate cytidylyltransferase (PCT1) from Saccharomyces cerevisiae (strain ATCC 204508 / S288c) (Baker's yeast).